A 157-amino-acid polypeptide reads, in one-letter code: Mediator of RNA polymerase II transcription subunit 10 (157 aa).

Belongs to the Mediator complex subunit 10 family. Component of the Mediator complex, which is composed of at least 21 subunits that form three structurally distinct submodules. The Mediator head module contains MED6, MED8, MED11, SRB4/MED17, SRB5/MED18, ROX3/MED19, SRB2/MED20 and SRB6/MED22, the middle module contains MED1, MED4, NUT1/MED5, MED7, CSE2/MED9, NUT2/MED10, SRB7/MED21 and SOH1/MED31, and the tail module contains MED2, PGD1/MED3, RGR1/MED14, GAL11/MED15 and SIN4/MED16. The head and the middle modules interact directly with RNA polymerase II, whereas the elongated tail module interacts with gene-specific regulatory proteins. NUT2/MED10 interacts directly with SRB7/MED21.

It is found in the nucleus. Its function is as follows. Component of the Mediator complex, a coactivator involved in the regulated transcription of nearly all RNA polymerase II-dependent genes. Mediator functions as a bridge to convey information from gene-specific regulatory proteins to the basal RNA polymerase II transcription machinery. The Mediator complex, having a compact conformation in its free form, is recruited to promoters by direct interactions with regulatory proteins and serves for the assembly of a functional preinitiation complex with RNA polymerase II and the general transcription factors. The Mediator complex unfolds to an extended conformation and partially surrounds RNA polymerase II, specifically interacting with the unphosphorylated form of the C-terminal domain (CTD) of RNA polymerase II. The Mediator complex dissociates from the RNA polymerase II holoenzyme and stays at the promoter when transcriptional elongation begins. The protein is Mediator of RNA polymerase II transcription subunit 10 (NUT2) of Saccharomyces cerevisiae (strain ATCC 204508 / S288c) (Baker's yeast).